The chain runs to 252 residues: Orotidine 5'-phosphate decarboxylase (252 aa).

Residues Asp24, Lys46, 73-82 (DLKFHDIPNT), Thr137, Arg199, Gln208, Gly228, and Arg229 contribute to the substrate site. The active-site Proton donor is Lys75.

The protein belongs to the OMP decarboxylase family. Type 1 subfamily. As to quaternary structure, homodimer.

The enzyme catalyses orotidine 5'-phosphate + H(+) = UMP + CO2. It participates in pyrimidine metabolism; UMP biosynthesis via de novo pathway; UMP from orotate: step 2/2. Catalyzes the decarboxylation of orotidine 5'-monophosphate (OMP) to uridine 5'-monophosphate (UMP). The polypeptide is Orotidine 5'-phosphate decarboxylase (Moorella thermoacetica (strain ATCC 39073 / JCM 9320)).